The primary structure comprises 249 residues: Tetrahydromethanopterin S-methyltransferase subunit A (249 aa).

At 2–225 the chain is on the cytoplasmic side; sequence PEKAEPAEGW…YMAGYLSGRT (224 aa). Position 88 (H88) interacts with 5-hydroxybenzimidazolylcob(I)amide. The helical transmembrane segment at 226–246 threads the bilayer; the sequence is MGLLIGIISGMIFLFLPMVVL. The Extracellular segment spans residues 247–249; that stretch reads GGV.

It belongs to the MtrA family. In terms of assembly, the complex is composed of 8 subunits; MtrA, MtrB, MtrC, MtrD, MtrE, MtrF, MtrG and MtrH. The cofactor is 5-hydroxybenzimidazolylcob(I)amide.

The protein localises to the cell membrane. The enzyme catalyses 5-methyl-5,6,7,8-tetrahydromethanopterin + coenzyme M + 2 Na(+)(in) = 5,6,7,8-tetrahydromethanopterin + methyl-coenzyme M + 2 Na(+)(out). It participates in one-carbon metabolism; methanogenesis from CO(2); methyl-coenzyme M from 5,10-methylene-5,6,7,8-tetrahydromethanopterin: step 2/2. Part of a complex that catalyzes the formation of methyl-coenzyme M and tetrahydromethanopterin from coenzyme M and methyl-tetrahydromethanopterin. This is an energy-conserving, sodium-ion translocating step. The protein is Tetrahydromethanopterin S-methyltransferase subunit A of Methanopyrus kandleri (strain AV19 / DSM 6324 / JCM 9639 / NBRC 100938).